A 571-amino-acid polypeptide reads, in one-letter code: MRYSKLFIPTMREIPSGINAISHILMLKAGYVRQLAAGLFIFLPLGWRVLNKINMILKEEMERIGAQEISMPILHPAEIWQETGRWYTIKEEMFRLKDRTGRDMCLGMTHEEIMTWIASKEIKSYRQLPQIWYQIQTKLRDEARPRGGVLRTREFIMKDSYSFDIDWEGLDKSYNLHAEAYHRIFTKCGLKYYQVESDPGIMGDMESHEFMAPTPAGEDEIVLCDSCGYSANIEVAKSELPTLPSLNFEYKEIYTPEKKSVKEVSDFLGLSEKYFIKTLIVISEKNGPVLVMLRGDQELNEKKLARIIGEFSFATSEQALEILGVELGFVGPVGHKIKKIADFSIQKEISYISGANKKNYHLQGIIPGIHFDAQWADIRRVKEEDRCPKCGNSLKIEKAIEVGNIFKLGTKYTEPLHAYFLDKDGKEKPIIMGSYGIGPARVAAAAIEQNHDSDGIIWPKSISPFDIEIIPLNMDDEKTVSIAEELYEKVTEIYNSFADRHMEVLIDDRDERPGVKFKDADLIGIPIQIVIGKKGLKENKVEIKKRRTKETKKVSVNKAVVEIVNSYYETY.

This sequence belongs to the class-II aminoacyl-tRNA synthetase family. ProS type 1 subfamily. Homodimer.

The protein resides in the cytoplasm. The enzyme catalyses tRNA(Pro) + L-proline + ATP = L-prolyl-tRNA(Pro) + AMP + diphosphate. Its function is as follows. Catalyzes the attachment of proline to tRNA(Pro) in a two-step reaction: proline is first activated by ATP to form Pro-AMP and then transferred to the acceptor end of tRNA(Pro). As ProRS can inadvertently accommodate and process non-cognate amino acids such as alanine and cysteine, to avoid such errors it has two additional distinct editing activities against alanine. One activity is designated as 'pretransfer' editing and involves the tRNA(Pro)-independent hydrolysis of activated Ala-AMP. The other activity is designated 'posttransfer' editing and involves deacylation of mischarged Ala-tRNA(Pro). The misacylated Cys-tRNA(Pro) is not edited by ProRS. This is Proline--tRNA ligase from Thermodesulfovibrio yellowstonii (strain ATCC 51303 / DSM 11347 / YP87).